The chain runs to 228 residues: Triosephosphate isomerase (228 aa).

11-13 is a substrate binding site; it reads NFK. The Electrophile role is filled by H95. E143 functions as the Proton acceptor in the catalytic mechanism. Residues I148, G183, and 204-205 contribute to the substrate site; that span reads AS.

The protein belongs to the triosephosphate isomerase family. As to quaternary structure, homotetramer; dimer of dimers.

The protein localises to the cytoplasm. The catalysed reaction is D-glyceraldehyde 3-phosphate = dihydroxyacetone phosphate. It functions in the pathway carbohydrate biosynthesis; gluconeogenesis. It participates in carbohydrate degradation; glycolysis; D-glyceraldehyde 3-phosphate from glycerone phosphate: step 1/1. In terms of biological role, involved in the gluconeogenesis. Catalyzes stereospecifically the conversion of dihydroxyacetone phosphate (DHAP) to D-glyceraldehyde-3-phosphate (G3P). This Pyrococcus horikoshii (strain ATCC 700860 / DSM 12428 / JCM 9974 / NBRC 100139 / OT-3) protein is Triosephosphate isomerase.